We begin with the raw amino-acid sequence, 918 residues long: Exostosin-like 3 (918 aa).

Over 1 to 30 (MTGYTMLRNGGVGNGGQTCMLRWSNRIRLT) the chain is Cytoplasmic. The tract at residues 1–140 (MTGYTMLRNG…LKNVISQTEH (140 aa)) is required for interaction with REG3A. Residues 31–51 (WLSFTLFIILVFFPLIAHYYL) traverse the membrane as a helical; Signal-anchor for type II membrane protein segment. Over 52–918 (TTLDEADEAG…HDKTKCFKFI (867 aa)) the chain is Lumenal. Intrachain disulfides connect C177/C182 and C188/C236. The N-linked (GlcNAc...) asparagine glycan is linked to N290. S361 is modified (phosphoserine). A disulfide bridge links C399 with C414. N-linked (GlcNAc...) asparagine glycosylation occurs at N591. UDP-N-acetyl-alpha-D-glucosamine is bound by residues L667, R671, N696, N722, R727, D743, D744, and D745. A Mn(2+)-binding site is contributed by D745. N789 carries an N-linked (GlcNAc...) asparagine glycan. A disulfide bridge connects residues C830 and C878. UDP-N-acetyl-alpha-D-glucosamine contacts are provided by E831, D832, and R875. D832 is a catalytic residue.

The protein belongs to the glycosyltransferase 47 family. In terms of assembly, homodimer; disulfide-linked. Interacts with REG3A. Mn(2+) serves as cofactor. Expressed in pancreatic islet beta-cells. Expressed in lung epithelial cells. Expressed in microglia.

Its subcellular location is the endoplasmic reticulum membrane. The protein localises to the golgi apparatus. It is found in the cell membrane. The protein resides in the nucleus. It catalyses the reaction 3-O-(beta-D-GlcA-(1-&gt;3)-beta-D-Gal-(1-&gt;3)-beta-D-Gal-(1-&gt;4)-beta-D-Xyl)-L-seryl-[protein] + UDP-N-acetyl-alpha-D-glucosamine = 3-O-(alpha-D-GlcNAc-(1-&gt;4)-beta-D-GlcA-(1-&gt;3)-beta-D-Gal-(1-&gt;3)-beta-D-Gal-(1-&gt;4)-beta-D-Xyl)-L-seryl-[protein] + UDP + H(+). It functions in the pathway glycan metabolism; heparan sulfate biosynthesis. Its function is as follows. Glycosyltransferase which regulates the biosynthesis of heparan sulfate (HS). Initiates HS synthesis by transferring the first N-acetyl-alpha-D-glucosamine (alpha-GlcNAc) residue (GlcNAcT-I activity) to the tetrasaccharide linker (GlcA-Gal-Gal-Xyl-)Ser core linker. May also transfer alpha-GlcNAc residues during HS elongation (GlcNAcT-II activity). Lacks glucuronyl transferase II (GlcAT-II) activity. Important for both skeletal development and hematopoiesis, through the formation of HS proteoglycans (HSPGs). Through the synthesis of HS, regulates postnatal pancreatic islet maturation and insulin secretion. Receptor for REG3A, REG3B and REG3G, induces the activation of downstream signaling pathways such as PI3K-AKT or RAS-RAF-MEK-ERK signaling pathway. Required for the function of REG3A in regulating keratinocyte proliferation and differentiation. Required for the inhibition of skin inflammation mediated by REG3A through the activation of PI3K-AKT-STAT3 pathway. Required for the function of REG3A and REG3G in glucose tolerance in pancreas. Expressed in microglia, is activated by nociceptor-derived REG3G in response to endotoxins, leading to the inhibition of kynurenine pathway to prevent endotoxic death. The protein is Exostosin-like 3 of Mus musculus (Mouse).